The sequence spans 103 residues: Large ribosomal subunit protein bL21 (103 aa).

It belongs to the bacterial ribosomal protein bL21 family. In terms of assembly, part of the 50S ribosomal subunit. Contacts protein L20.

In terms of biological role, this protein binds to 23S rRNA in the presence of protein L20. The protein is Large ribosomal subunit protein bL21 of Alcanivorax borkumensis (strain ATCC 700651 / DSM 11573 / NCIMB 13689 / SK2).